Reading from the N-terminus, the 192-residue chain is UPF0149 protein YgfB (192 aa).

The protein belongs to the UPF0149 family.

This Escherichia coli O127:H6 (strain E2348/69 / EPEC) protein is UPF0149 protein YgfB.